The following is a 277-amino-acid chain: Large ribosomal subunit protein uL2 (277 aa).

The tract at residues 222-277 (GVAMNPIDHPHGGGEGRTSGGRHPVTPWGKPTKGKKTRTNKSTDKFILLSRHKRKK) is disordered.

The protein belongs to the universal ribosomal protein uL2 family. As to quaternary structure, part of the 50S ribosomal subunit. Forms a bridge to the 30S subunit in the 70S ribosome.

In terms of biological role, one of the primary rRNA binding proteins. Required for association of the 30S and 50S subunits to form the 70S ribosome, for tRNA binding and peptide bond formation. It has been suggested to have peptidyltransferase activity; this is somewhat controversial. Makes several contacts with the 16S rRNA in the 70S ribosome. In Bradyrhizobium sp. (strain ORS 278), this protein is Large ribosomal subunit protein uL2.